The sequence spans 546 residues: 2-isopropylmalate synthase (546 aa).

One can recognise a Pyruvate carboxyltransferase domain in the interval 8–271; that stretch reads ILIFDTTLRD…NSFFKRNPDS (264 aa). Aspartate 17, histidine 208, histidine 210, and asparagine 244 together coordinate Mn(2+). A regulatory domain region spans residues 408–546; it reads QLSLVQVSCG…NNTYISNPAN (139 aa).

The protein belongs to the alpha-IPM synthase/homocitrate synthase family. LeuA type 1 subfamily. In terms of assembly, homodimer. Mn(2+) is required as a cofactor.

It localises to the cytoplasm. It carries out the reaction 3-methyl-2-oxobutanoate + acetyl-CoA + H2O = (2S)-2-isopropylmalate + CoA + H(+). Its pathway is amino-acid biosynthesis; L-leucine biosynthesis; L-leucine from 3-methyl-2-oxobutanoate: step 1/4. Its function is as follows. Catalyzes the condensation of the acetyl group of acetyl-CoA with 3-methyl-2-oxobutanoate (2-ketoisovalerate) to form 3-carboxy-3-hydroxy-4-methylpentanoate (2-isopropylmalate). This is 2-isopropylmalate synthase from Prochlorococcus marinus (strain MIT 9301).